A 258-amino-acid chain; its full sequence is MAVAVRVIPCLDVDAGRVVKGVNFEGLRDAGDPVELAHRYDNGGADELTFLDVTASSGNRETTFDVVRRTAEEVFIPLTVGGGVRGVAEVDKLLRFGADKASINTAAVARPDVIDEITRHFGSQVLVLSVDARRTREGDQPTSSGFEVTTHGGRTGTGIDAVAWAKEAADRGVGEILLNSIDADGTKDGFDLELIRLVRAAVNIPIIASGGAGVPAHFPPAVEAGADAVLAASVFHFGPDDMIAQVKTAIRDAGFEVR.

Active-site residues include Asp-12 and Asp-131.

It belongs to the HisA/HisF family. As to quaternary structure, heterodimer of HisH and HisF.

The protein localises to the cytoplasm. The enzyme catalyses 5-[(5-phospho-1-deoxy-D-ribulos-1-ylimino)methylamino]-1-(5-phospho-beta-D-ribosyl)imidazole-4-carboxamide + L-glutamine = D-erythro-1-(imidazol-4-yl)glycerol 3-phosphate + 5-amino-1-(5-phospho-beta-D-ribosyl)imidazole-4-carboxamide + L-glutamate + H(+). It functions in the pathway amino-acid biosynthesis; L-histidine biosynthesis; L-histidine from 5-phospho-alpha-D-ribose 1-diphosphate: step 5/9. IGPS catalyzes the conversion of PRFAR and glutamine to IGP, AICAR and glutamate. The HisF subunit catalyzes the cyclization activity that produces IGP and AICAR from PRFAR using the ammonia provided by the HisH subunit. This chain is Imidazole glycerol phosphate synthase subunit HisF, found in Paenarthrobacter aurescens (strain TC1).